A 117-amino-acid polypeptide reads, in one-letter code: Large ribosomal subunit protein uL18 (117 aa).

The protein belongs to the universal ribosomal protein uL18 family. As to quaternary structure, part of the 50S ribosomal subunit; part of the 5S rRNA/L5/L18/L25 subcomplex. Contacts the 5S and 23S rRNAs.

In terms of biological role, this is one of the proteins that bind and probably mediate the attachment of the 5S RNA into the large ribosomal subunit, where it forms part of the central protuberance. In Pseudoalteromonas atlantica (strain T6c / ATCC BAA-1087), this protein is Large ribosomal subunit protein uL18.